We begin with the raw amino-acid sequence, 742 residues long: Catalase-peroxidase (742 aa).

Residues 1 to 43 (MSDSCPVAHEGNTQSTSESENPVIPSPTPAANRPRNNRDWWPN) form a disordered region. Polar residues predominate over residues 11 to 20 (GNTQSTSESE). The tryptophyl-tyrosyl-methioninium (Trp-Tyr) (with M-257) cross-link spans 109-231 (WHAAGTYRIA…LGAVQMGLIY (123 aa)). Histidine 110 functions as the Proton acceptor in the catalytic mechanism. The tryptophyl-tyrosyl-methioninium (Tyr-Met) (with W-109) cross-link spans 231 to 257 (YVNPEGPNGQPDPLAAARDIRETFSRM). Residue histidine 272 participates in heme b binding.

This sequence belongs to the peroxidase family. Peroxidase/catalase subfamily. In terms of assembly, homodimer or homotetramer. The cofactor is heme b. In terms of processing, formation of the three residue Trp-Tyr-Met cross-link is important for the catalase, but not the peroxidase activity of the enzyme.

It carries out the reaction H2O2 + AH2 = A + 2 H2O. The catalysed reaction is 2 H2O2 = O2 + 2 H2O. Its function is as follows. Bifunctional enzyme with both catalase and broad-spectrum peroxidase activity. This is Catalase-peroxidase from Rhodococcus jostii (strain RHA1).